The primary structure comprises 1201 residues: Vitamin B12-dependent ribonucleotide reductase (1201 aa).

Residues serine 153, 198–199, glycine 230, 482–486, and 683–687 each bind substrate; these read AC, NPCSE, and PTGTI. Cysteine 199 and cysteine 495 are disulfide-bonded. Catalysis depends on asparagine 482, which acts as the Proton acceptor. Cysteine 484 (cysteine radical intermediate) is an active-site residue. The Proton acceptor role is filled by glutamate 486. Residues 1100–1118 show a composition bias toward basic and acidic residues; the sequence is DEIGSKRATAESNGQEKET. The interval 1100 to 1120 is disordered; that stretch reads DEIGSKRATAESNGQEKETLS.

It belongs to the ribonucleoside diphosphate reductase class-2 family. It depends on adenosylcob(III)alamin as a cofactor.

The catalysed reaction is a 2'-deoxyribonucleoside 5'-diphosphate + [thioredoxin]-disulfide + H2O = a ribonucleoside 5'-diphosphate + [thioredoxin]-dithiol. Catalyzes the reduction of ribonucleotides to deoxyribonucleotides. May function to provide a pool of deoxyribonucleotide precursors for DNA repair during oxygen limitation and/or for immediate growth after restoration of oxygen. The protein is Vitamin B12-dependent ribonucleotide reductase (nrdJ) of Leptospira interrogans serogroup Icterohaemorrhagiae serovar copenhageni (strain Fiocruz L1-130).